The primary structure comprises 202 residues: MTAIAIRPEALRDAVAAALGDKVRDIVLALDELTVTVSAADYLAAMQLLRDAPGCRFEQLMDLCGIDYSTYGDVGTEGPRYAVVSHLLSVSLNQRVRVKVFCPDDDFPVVASVSGIWNSANWYEREAFDLYGIVFDGHDDLRRILTDYGFIGHPFRKDFPLSGHVEMRYDTEARRVVYEPVTIEPREITPRIIREEKYGGLH.

Belongs to the complex I 30 kDa subunit family. NDH-1 is composed of 14 different subunits. Subunits NuoB, C, D, E, F, and G constitute the peripheral sector of the complex.

It is found in the cell inner membrane. The enzyme catalyses a quinone + NADH + 5 H(+)(in) = a quinol + NAD(+) + 4 H(+)(out). NDH-1 shuttles electrons from NADH, via FMN and iron-sulfur (Fe-S) centers, to quinones in the respiratory chain. The immediate electron acceptor for the enzyme in this species is believed to be ubiquinone. Couples the redox reaction to proton translocation (for every two electrons transferred, four hydrogen ions are translocated across the cytoplasmic membrane), and thus conserves the redox energy in a proton gradient. This Paracidovorax citrulli (strain AAC00-1) (Acidovorax citrulli) protein is NADH-quinone oxidoreductase subunit C.